Reading from the N-terminus, the 234-residue chain is MKIYLIWGATCTGKTEHSIKLSKSTGWPVIVLDRVQCCFDIATGSGRPHPEELQSTRRIYLDNRRISEGVISAEEANDRLKLEVNKHIDSGGVILEGGSISLLKLISKDPYWCDRFIWSQHRMRLQDTDVFMDKAKARVRRMLVGSTETTGLLDELVAAQSDLNAKLAIQDIDGYRYIMNYAQARRLSITQLLNVMTGDMKEELINGIALEYYEHAKWQERDFPAEWLAERSTR.

The protein belongs to the isopentenyl transferase family.

The enzyme catalyses dimethylallyl diphosphate + AMP = N(6)-(dimethylallyl)adenosine 5'-phosphate + diphosphate. Its function is as follows. Transfers dimethylallyl groups to AMP as part of the biosynthesis of cytokinin phytohormones. The chain is Adenylate dimethylallyltransferase (ptz) from Pseudomonas savastanoi (Pseudomonas syringae pv. savastanoi).